Reading from the N-terminus, the 184-residue chain is MSKLGKKPILIPSGVQINIEGDMISVKGPKGTLSQRLSPYIKVAIEENKLWVQQNEESIVRRSQRKMLRTFQGTYWSLIKNMITGVTEGFEKQLEIVGVGYRAQLQGNKVSLQLGYTHPIVLEPPVGVSVEVPAPNVVVVKGIDKQKVGQFAAEVRSWRKVNVYSGKGVKYRNEVVKLKEGKKA.

Belongs to the universal ribosomal protein uL6 family. As to quaternary structure, part of the 50S ribosomal subunit.

This protein binds to the 23S rRNA, and is important in its secondary structure. It is located near the subunit interface in the base of the L7/L12 stalk, and near the tRNA binding site of the peptidyltransferase center. In Pseudothermotoga lettingae (strain ATCC BAA-301 / DSM 14385 / NBRC 107922 / TMO) (Thermotoga lettingae), this protein is Large ribosomal subunit protein uL6.